A 456-amino-acid chain; its full sequence is GTP cyclohydrolase 1 (456 aa).

Cysteine 340, histidine 343, and cysteine 412 together coordinate Zn(2+).

This sequence belongs to the GTP cyclohydrolase I family. As to quaternary structure, homodimer. Expressed in leaves and unripe fruits.

It catalyses the reaction GTP + H2O = 7,8-dihydroneopterin 3'-triphosphate + formate + H(+). It participates in cofactor biosynthesis; 7,8-dihydroneopterin triphosphate biosynthesis; 7,8-dihydroneopterin triphosphate from GTP: step 1/1. In terms of biological role, GTP cyclohydrolase 1 is the first enzyme in the biosynthetic pathway leading to folic acid. The chain is GTP cyclohydrolase 1 (GCH1) from Solanum lycopersicum (Tomato).